The chain runs to 61 residues: Photosystem II reaction center protein K (61 aa).

Residues 1-24 (MLNIFSLICICLNSALYSSNFFFA) constitute a propeptide that is removed on maturation. Residues 40–60 (MPVIPLFFFLLAFVWQAAVSF) form a helical membrane-spanning segment.

The protein belongs to the PsbK family. PSII is composed of 1 copy each of membrane proteins PsbA, PsbB, PsbC, PsbD, PsbE, PsbF, PsbH, PsbI, PsbJ, PsbK, PsbL, PsbM, PsbT, PsbX, PsbY, PsbZ, Psb30/Ycf12, at least 3 peripheral proteins of the oxygen-evolving complex and a large number of cofactors. It forms dimeric complexes.

Its subcellular location is the plastid. The protein resides in the chloroplast thylakoid membrane. In terms of biological role, one of the components of the core complex of photosystem II (PSII). PSII is a light-driven water:plastoquinone oxidoreductase that uses light energy to abstract electrons from H(2)O, generating O(2) and a proton gradient subsequently used for ATP formation. It consists of a core antenna complex that captures photons, and an electron transfer chain that converts photonic excitation into a charge separation. The chain is Photosystem II reaction center protein K from Vitis vinifera (Grape).